Consider the following 473-residue polypeptide: Photosystem II CP43 reaction center protein (473 aa).

The propeptide occupies 1–14 (MKTLYSLRRFSHVE). Thr-15 bears the N-acetylthreonine mark. Residue Thr-15 is modified to Phosphothreonine. The next 5 membrane-spanning stretches (helical) occupy residues 69-93 (LFEV…PHLA), 134-155 (LLGP…KDRN), 178-200 (KALY…RKIT), 255-275 (KPFA…LSYS), and 291-312 (WFNN…ASQA). Glu-367 serves as a coordination point for [CaMn4O5] cluster. A helical membrane pass occupies residues 447-471 (RARAAAAGFEKGIDRDFEPVLSMTP).

This sequence belongs to the PsbB/PsbC family. PsbC subfamily. As to quaternary structure, PSII is composed of 1 copy each of membrane proteins PsbA, PsbB, PsbC, PsbD, PsbE, PsbF, PsbH, PsbI, PsbJ, PsbK, PsbL, PsbM, PsbT, PsbX, PsbY, PsbZ, Psb30/Ycf12, at least 3 peripheral proteins of the oxygen-evolving complex and a large number of cofactors. It forms dimeric complexes. Binds multiple chlorophylls and provides some of the ligands for the Ca-4Mn-5O cluster of the oxygen-evolving complex. It may also provide a ligand for a Cl- that is required for oxygen evolution. PSII binds additional chlorophylls, carotenoids and specific lipids. serves as cofactor.

It localises to the plastid membrane. Its function is as follows. One of the components of the core complex of photosystem II (PSII). It binds chlorophyll and helps catalyze the primary light-induced photochemical processes of PSII. PSII is a light-driven water:plastoquinone oxidoreductase, using light energy to abstract electrons from H(2)O, generating O(2) and a proton gradient subsequently used for ATP formation. This Cuscuta obtusiflora (Peruvian dodder) protein is Photosystem II CP43 reaction center protein.